The chain runs to 161 residues: Allophycocyanin alpha chain 1 (161 aa).

N71 is modified (N4-methylasparagine). Residue C81 participates in (2R,3E)-phycocyanobilin binding.

It belongs to the phycobiliprotein family. In terms of assembly, component of the phycobilisome. Heterodimer of an alpha and a beta chain. Contains one covalently linked bilin chromophore.

Its subcellular location is the cellular thylakoid membrane. Its function is as follows. Light-harvesting photosynthetic bile pigment-protein from the phycobiliprotein complex. Allophycocyanin has a maximum absorption at approximately 650 nanometers. This chain is Allophycocyanin alpha chain 1, found in Microchaete diplosiphon (Fremyella diplosiphon).